The primary structure comprises 311 residues: Short chain dehydrogenase opdN (311 aa).

NADP(+) is bound by residues Leu-48, Lys-73, Glu-96, Asn-123, Tyr-217, and Lys-221. The active-site Proton donor is Tyr-217. Residue Lys-221 is the Lowers pKa of active site Tyr of the active site.

The protein belongs to the short-chain dehydrogenases/reductases (SDR) family.

It functions in the pathway secondary metabolite biosynthesis. Short chain dehydrogenase; part of the gene cluster that mediates the biosynthesis of oxopyrrolidines, polyketide-amino acid hybrid compounds with feature structures of tetramic acid. Does not seem to play a role in oxopyrrolidines A and B biosynthesis. May be involved in further modifications of these oxopyrrolidines. This is Short chain dehydrogenase opdN from Penicillium oxalicum (strain 114-2 / CGMCC 5302) (Penicillium decumbens).